Here is a 188-residue protein sequence, read N- to C-terminus: Guanylate kinase (188 aa).

In terms of domain architecture, Guanylate kinase-like spans 8–188 (GRIVVLAGPS…AVAAISEILR (181 aa)). ATP is bound at residue 15–22 (GPSAVGKS).

This sequence belongs to the guanylate kinase family.

It is found in the cytoplasm. It catalyses the reaction GMP + ATP = GDP + ADP. Functionally, essential for recycling GMP and indirectly, cGMP. This Corynebacterium jeikeium (strain K411) protein is Guanylate kinase.